The sequence spans 605 residues: Protein cueball (605 aa).

An N-terminal signal peptide occupies residues Met1–Gly31. 3 N-linked (GlcNAc...) asparagine glycosylation sites follow: Asn27, Asn64, and Asn85. Topologically, residues Glu32–Gly486 are extracellular. LDL-receptor class B repeat units lie at residues Glu53–Asn97, Arg98–Arg145, Arg146–Ser190, and Asp191–Ala236. N-linked (GlcNAc...) asparagine glycans are attached at residues Asn261 and Asn314. EGF-like domains lie at Glu322–Glu359 and Glu394–Glu431. 5 disulfides stabilise this stretch: Cys334–Cys347, Cys349–Cys358, Cys398–Cys408, Cys402–Cys419, and Cys421–Cys430. 2 N-linked (GlcNAc...) asparagine glycosylation sites follow: Asn433 and Asn464. The helical transmembrane segment at Pro487 to Val507 threads the bilayer. Over His508–Ser605 the chain is Cytoplasmic.

This sequence belongs to the cueball family.

The protein localises to the cell membrane. Has a role in spermatogenesis and oogenesis. In Drosophila grimshawi (Hawaiian fruit fly), this protein is Protein cueball.